We begin with the raw amino-acid sequence, 318 residues long: Transaldolase (318 aa).

Lys132 functions as the Schiff-base intermediate with substrate in the catalytic mechanism.

Belongs to the transaldolase family. Type 1 subfamily. Homodimer.

Its subcellular location is the cytoplasm. It catalyses the reaction D-sedoheptulose 7-phosphate + D-glyceraldehyde 3-phosphate = D-erythrose 4-phosphate + beta-D-fructose 6-phosphate. It functions in the pathway carbohydrate degradation; pentose phosphate pathway; D-glyceraldehyde 3-phosphate and beta-D-fructose 6-phosphate from D-ribose 5-phosphate and D-xylulose 5-phosphate (non-oxidative stage): step 2/3. Its function is as follows. Transaldolase is important for the balance of metabolites in the pentose-phosphate pathway. This Shewanella sp. (strain MR-7) protein is Transaldolase.